The following is a 209-amino-acid chain: Kynurenine formamidase (209 aa).

Position 20 (W20) interacts with substrate. Zn(2+) contacts are provided by H50, H54, and D56. H60 (proton donor/acceptor) is an active-site residue. Residues H161 and E173 each contribute to the Zn(2+) site.

It belongs to the Cyclase 1 superfamily. KynB family. Homodimer. The cofactor is Zn(2+).

The enzyme catalyses N-formyl-L-kynurenine + H2O = L-kynurenine + formate + H(+). The protein operates within amino-acid degradation; L-tryptophan degradation via kynurenine pathway; L-kynurenine from L-tryptophan: step 2/2. Functionally, catalyzes the hydrolysis of N-formyl-L-kynurenine to L-kynurenine, the second step in the kynurenine pathway of tryptophan degradation. In Bacillus thuringiensis subsp. konkukian (strain 97-27), this protein is Kynurenine formamidase.